The primary structure comprises 473 residues: Glutamate--tRNA ligase (473 aa).

The 'HIGH' region signature appears at Pro-10 to Asn-20. Zn(2+)-binding residues include Cys-98, Cys-100, Cys-125, and His-127. The short motif at Lys-242 to Arg-246 is the 'KMSKS' region element. Residue Lys-245 participates in ATP binding.

Belongs to the class-I aminoacyl-tRNA synthetase family. Glutamate--tRNA ligase type 1 subfamily. Monomer. Requires Zn(2+) as cofactor.

It is found in the cytoplasm. It carries out the reaction tRNA(Glu) + L-glutamate + ATP = L-glutamyl-tRNA(Glu) + AMP + diphosphate. Its function is as follows. Catalyzes the attachment of glutamate to tRNA(Glu) in a two-step reaction: glutamate is first activated by ATP to form Glu-AMP and then transferred to the acceptor end of tRNA(Glu). The chain is Glutamate--tRNA ligase from Aquifex aeolicus (strain VF5).